Consider the following 629-residue polypeptide: tRNA uridine 5-carboxymethylaminomethyl modification enzyme MnmG (629 aa).

FAD contacts are provided by residues Gly-15–Gly-20, Val-127, and Ser-182. A disordered region spans residues Thr-203–Arg-227. Over residues Ser-215–Arg-227 the composition is skewed to basic and acidic residues. Residue Gly-274–Phe-288 participates in NAD(+) binding. Gln-371 is a binding site for FAD.

It belongs to the MnmG family. Homodimer. Heterotetramer of two MnmE and two MnmG subunits. FAD is required as a cofactor.

The protein resides in the cytoplasm. NAD-binding protein involved in the addition of a carboxymethylaminomethyl (cmnm) group at the wobble position (U34) of certain tRNAs, forming tRNA-cmnm(5)s(2)U34. This is tRNA uridine 5-carboxymethylaminomethyl modification enzyme MnmG from Listeria welshimeri serovar 6b (strain ATCC 35897 / DSM 20650 / CCUG 15529 / CIP 8149 / NCTC 11857 / SLCC 5334 / V8).